The primary structure comprises 113 residues: Ribosome-associated factor Y (113 aa).

Lys-66 is modified (N6-acetyllysine). Positions 91–113 (KGEARRAATSVKDANFVEEVEEE) are disordered.

It belongs to the HPF/YfiA ribosome-associated protein family. YfiA subfamily. In terms of assembly, associates mainly with 70S ribosomes.

During stationary phase, prevents 70S dimer formation, probably in order to regulate translation efficiency during transition between the exponential and the stationary phases. In addition, during environmental stress such as cold shock or excessive cell density at stationary phase, stabilizes the 70S ribosome against dissociation, inhibits translation initiation and increase translation accuracy. When normal growth conditions are restored, is quickly released from the ribosome. The chain is Ribosome-associated factor Y from Escherichia coli O157:H7.